A 367-amino-acid polypeptide reads, in one-letter code: Alanine racemase (367 aa).

Residue Lys-40 is the Proton acceptor; specific for D-alanine of the active site. An N6-(pyridoxal phosphate)lysine modification is found at Lys-40. Residue Arg-136 coordinates substrate. Tyr-263 acts as the Proton acceptor; specific for L-alanine in catalysis. Residue Met-310 participates in substrate binding.

The protein belongs to the alanine racemase family. Pyridoxal 5'-phosphate serves as cofactor.

It carries out the reaction L-alanine = D-alanine. The protein operates within amino-acid biosynthesis; D-alanine biosynthesis; D-alanine from L-alanine: step 1/1. Catalyzes the interconversion of L-alanine and D-alanine. May also act on other amino acids. The chain is Alanine racemase (alr) from Streptococcus pneumoniae serotype 19F (strain G54).